The following is a 552-amino-acid chain: Chaperonin GroEL (552 aa).

ATP is bound by residues 29–32 (TAGP), Lys50, 86–90 (DGTTT), Gly417, and Asp499.

Belongs to the chaperonin (HSP60) family. Forms a cylinder of 14 subunits composed of two heptameric rings stacked back-to-back. Interacts with the co-chaperonin GroES.

The protein localises to the cytoplasm. The enzyme catalyses ATP + H2O + a folded polypeptide = ADP + phosphate + an unfolded polypeptide.. Functionally, together with its co-chaperonin GroES, plays an essential role in assisting protein folding. The GroEL-GroES system forms a nano-cage that allows encapsulation of the non-native substrate proteins and provides a physical environment optimized to promote and accelerate protein folding. In Ehrlichia canis (strain Jake), this protein is Chaperonin GroEL.